The following is a 70-amino-acid chain: Conotoxin ba3a (70 aa).

Positions 1 to 20 are cleaved as a signal peptide; it reads MLKIGVMLSIILVLFPLATL. The propeptide occupies 21–55; sequence QLVAERPAAERYAENKQDLNPDERRNYLVDLGVER.

In terms of tissue distribution, expressed by the venom duct.

The protein resides in the secreted. In Conus bayani (Bayan's cone), this protein is Conotoxin ba3a.